We begin with the raw amino-acid sequence, 500 residues long: ATP synthase subunit alpha (500 aa).

ATP is bound at residue 169 to 176 (GDRQTGKT).

Belongs to the ATPase alpha/beta chains family. In terms of assembly, F-type ATPases have 2 components, CF(1) - the catalytic core - and CF(0) - the membrane proton channel. CF(1) has five subunits: alpha(3), beta(3), gamma(1), delta(1), epsilon(1). CF(0) has three main subunits: a(1), b(2) and c(9-12). The alpha and beta chains form an alternating ring which encloses part of the gamma chain. CF(1) is attached to CF(0) by a central stalk formed by the gamma and epsilon chains, while a peripheral stalk is formed by the delta and b chains.

It localises to the cell membrane. It catalyses the reaction ATP + H2O + 4 H(+)(in) = ADP + phosphate + 5 H(+)(out). Produces ATP from ADP in the presence of a proton gradient across the membrane. The alpha chain is a regulatory subunit. This is ATP synthase subunit alpha from Lactococcus lactis subsp. cremoris (strain MG1363).